A 148-amino-acid chain; its full sequence is Urease accessory protein UreE (148 aa).

The protein belongs to the UreE family.

The protein resides in the cytoplasm. In terms of biological role, involved in urease metallocenter assembly. Binds nickel. Probably functions as a nickel donor during metallocenter assembly. This Aliarcobacter butzleri (strain RM4018) (Arcobacter butzleri) protein is Urease accessory protein UreE.